The following is a 253-amino-acid chain: Tryptophan synthase alpha chain (253 aa).

Active-site proton acceptor residues include Glu47 and Asp58.

The protein belongs to the TrpA family. Tetramer of two alpha and two beta chains.

The catalysed reaction is (1S,2R)-1-C-(indol-3-yl)glycerol 3-phosphate + L-serine = D-glyceraldehyde 3-phosphate + L-tryptophan + H2O. It participates in amino-acid biosynthesis; L-tryptophan biosynthesis; L-tryptophan from chorismate: step 5/5. The alpha subunit is responsible for the aldol cleavage of indoleglycerol phosphate to indole and glyceraldehyde 3-phosphate. This is Tryptophan synthase alpha chain from Lactococcus lactis subsp. cremoris (strain MG1363).